Reading from the N-terminus, the 247-residue chain is Ice-binding protein (247 aa).

An N-terminal signal peptide occupies residues M1–A19. N-linked (GlcNAc...) asparagine glycosylation is present at N219.

This sequence belongs to the ice-binding protein family.

It localises to the secreted. Binds ice crystals and most probably inhibits their growth in order to prevent cell damage from extracellular ice. This is Ice-binding protein from Flammulina populicola (Enokitake mushroom).